The sequence spans 243 residues: DNA repair protein RecO (243 aa).

The protein belongs to the RecO family.

Involved in DNA repair and RecF pathway recombination. This is DNA repair protein RecO from Frankia casuarinae (strain DSM 45818 / CECT 9043 / HFP020203 / CcI3).